The primary structure comprises 312 residues: Methionyl-tRNA formyltransferase (312 aa).

109–112 contributes to the (6S)-5,6,7,8-tetrahydrofolate binding site; it reads SLLP.

It belongs to the Fmt family.

The enzyme catalyses L-methionyl-tRNA(fMet) + (6R)-10-formyltetrahydrofolate = N-formyl-L-methionyl-tRNA(fMet) + (6S)-5,6,7,8-tetrahydrofolate + H(+). Functionally, attaches a formyl group to the free amino group of methionyl-tRNA(fMet). The formyl group appears to play a dual role in the initiator identity of N-formylmethionyl-tRNA by promoting its recognition by IF2 and preventing the misappropriation of this tRNA by the elongation apparatus. The protein is Methionyl-tRNA formyltransferase of Listeria monocytogenes serotype 4b (strain CLIP80459).